The following is a 642-amino-acid chain: Frizzled and smoothened-like protein B (642 aa).

The signal sequence occupies residues 1–26 (MFNKNNNNNKIIIILKLFLIILIVNN). The Extracellular segment spans residues 27–264 (NNNIKTFGLN…KWHQMYNMSK (238 aa)). One can recognise an FZ domain in the interval 47–197 (DPTATCSNYI…GFFPVPCSDP (151 aa)). Disulfide bonds link cysteine 52–cysteine 123, cysteine 65–cysteine 116, and cysteine 143–cysteine 194. Residues asparagine 80, asparagine 153, asparagine 162, asparagine 177, asparagine 203, asparagine 222, and asparagine 261 are each glycosylated (N-linked (GlcNAc...) asparagine). The helical transmembrane segment at 265-285 (ILSTISFVCSIYNVLTFGILN) threads the bilayer. The Cytoplasmic segment spans residues 286 to 294 (HRRSKYNYC). Residues 295–315 (ITFFSASVIIITMMDIVTYGI) form a helical membrane-spanning segment. Over 316 to 344 (GYEKLLCPEPGRFAVQSDVSCGATGALFH) the chain is Extracellular. Residues 345-365 (IGITNGVFWWTTMSICLFAVV) form a helical membrane-spanning segment. The Cytoplasmic portion of the chain corresponds to 366 to 375 (KRIKLFDFRY). Residues 376-398 (FIIFNTTASLISVIIPLAGNAFM) traverse the membrane as a helical segment. The Extracellular segment spans residues 399–416 (AGTGSLACWIRKTWYVNS). Residues 417 to 437 (VFWIPCGIALTIGSVCIILVI) form a helical membrane-spanning segment. The Cytoplasmic segment spans residues 438-460 (YEIYKITKNVSTKDNRMILLQIK). The chain crosses the membrane as a helical span at residues 461-481 (PFLCVTLVGGSFYYLFIFNFD). Residue asparagine 482 is glycosylated (N-linked (GlcNAc...) asparagine). Residues 482 to 514 (NESHSKEYKEKVVDYVMCLLSDTGKECLMAGPN) are Extracellular-facing. A helical transmembrane segment spans residues 515-535 (YVAYFVFYFFIRLFGITFFCI). Topologically, residues 536-642 (YGTSQNARDI…INSASNTSSD (107 aa)) are cytoplasmic. Positions 578–642 (GTNPTSNSKN…INSASNTSSD (65 aa)) are disordered. Over residues 583 to 598 (SNSKNSKNNQNNQNNN) the composition is skewed to low complexity. Positions 584–611 (NSKNSKNNQNNQNNNSRKEFESKNIELE) form a coiled coil. Residues 599-609 (SRKEFESKNIE) are compositionally biased toward basic and acidic residues. Polar residues-rich tracts occupy residues 614–623 (ESISKGQTTR) and 632–642 (NINSASNTSSD).

The protein belongs to the G-protein coupled receptor Fz/Smo family.

The protein resides in the membrane. This chain is Frizzled and smoothened-like protein B (fslB), found in Dictyostelium discoideum (Social amoeba).